A 277-amino-acid chain; its full sequence is Putative pyruvate, phosphate dikinase regulatory protein (277 aa).

151-158 (GISRTSKT) lines the ADP pocket.

Belongs to the pyruvate, phosphate/water dikinase regulatory protein family. PDRP subfamily.

The enzyme catalyses N(tele)-phospho-L-histidyl/L-threonyl-[pyruvate, phosphate dikinase] + ADP = N(tele)-phospho-L-histidyl/O-phospho-L-threonyl-[pyruvate, phosphate dikinase] + AMP + H(+). The catalysed reaction is N(tele)-phospho-L-histidyl/O-phospho-L-threonyl-[pyruvate, phosphate dikinase] + phosphate + H(+) = N(tele)-phospho-L-histidyl/L-threonyl-[pyruvate, phosphate dikinase] + diphosphate. Functionally, bifunctional serine/threonine kinase and phosphorylase involved in the regulation of the pyruvate, phosphate dikinase (PPDK) by catalyzing its phosphorylation/dephosphorylation. This is Putative pyruvate, phosphate dikinase regulatory protein from Alkaliphilus oremlandii (strain OhILAs) (Clostridium oremlandii (strain OhILAs)).